A 515-amino-acid polypeptide reads, in one-letter code: Cytochrome P450 1A2 (515 aa).

The O-linked (GlcNAc) serine glycan is linked to Ser69. Phe226 serves as a coordination point for substrate. Residue Cys458 coordinates heme.

The protein belongs to the cytochrome P450 family. As to quaternary structure, interacts with PGRMC1; the interaction requires PGRMC1 homodimerization. Requires heme as cofactor.

The protein localises to the endoplasmic reticulum membrane. Its subcellular location is the microsome membrane. It carries out the reaction an organic molecule + reduced [NADPH--hemoprotein reductase] + O2 = an alcohol + oxidized [NADPH--hemoprotein reductase] + H2O + H(+). The enzyme catalyses 17beta-estradiol + reduced [NADPH--hemoprotein reductase] + O2 = 2-hydroxy-17beta-estradiol + oxidized [NADPH--hemoprotein reductase] + H2O + H(+). The catalysed reaction is 17beta-estradiol + reduced [NADPH--hemoprotein reductase] + O2 = 4-hydroxy-17beta-estradiol + oxidized [NADPH--hemoprotein reductase] + H2O + H(+). It catalyses the reaction estrone + reduced [NADPH--hemoprotein reductase] + O2 = 2-hydroxyestrone + oxidized [NADPH--hemoprotein reductase] + H2O + H(+). It carries out the reaction estrone + reduced [NADPH--hemoprotein reductase] + O2 = 4-hydroxyestrone + oxidized [NADPH--hemoprotein reductase] + H2O + H(+). The enzyme catalyses cholesterol + reduced [NADPH--hemoprotein reductase] + O2 = 25-hydroxycholesterol + oxidized [NADPH--hemoprotein reductase] + H2O + H(+). The catalysed reaction is all-trans-retinol + reduced [NADPH--hemoprotein reductase] + O2 = all-trans-retinal + oxidized [NADPH--hemoprotein reductase] + 2 H2O + H(+). It catalyses the reaction all-trans-retinal + reduced [NADPH--hemoprotein reductase] + O2 = all-trans-retinoate + oxidized [NADPH--hemoprotein reductase] + H2O + 2 H(+). It carries out the reaction (5Z,8Z,11Z,14Z)-eicosatetraenoate + reduced [NADPH--hemoprotein reductase] + O2 = (14R,15S)-epoxy-(5Z,8Z,11Z)-eicosatrienoate + oxidized [NADPH--hemoprotein reductase] + H2O + H(+). The enzyme catalyses (5Z,8Z,11Z,14Z)-eicosatetraenoate + reduced [NADPH--hemoprotein reductase] + O2 = (14S,15R)-epoxy-(5Z,8Z,11Z)-eicosatrienoate + oxidized [NADPH--hemoprotein reductase] + H2O + H(+). The catalysed reaction is (5Z,8Z,11Z,14Z,17Z)-eicosapentaenoate + reduced [NADPH--hemoprotein reductase] + O2 = (17R,18S)-epoxy-(5Z,8Z,11Z,14Z)-eicosatetraenoate + oxidized [NADPH--hemoprotein reductase] + H2O + H(+). It catalyses the reaction (4Z,7Z,10Z,13Z,16Z,19Z)-docosahexaenoate + reduced [NADPH--hemoprotein reductase] + O2 = (19R,20S)-epoxy-(4Z,7Z,10Z,13Z,16Z)-docosapentaenoate + oxidized [NADPH--hemoprotein reductase] + H2O + H(+). It carries out the reaction (5S)-hydroperoxy-(6E,8Z,11Z,14Z)-eicosatetraenoate = 5-oxo-(6E,8Z,11Z,14Z)-eicosatetraenoate + H2O. The enzyme catalyses (12S)-hydroperoxy-(5Z,8Z,10E,14Z)-eicosatetraenoate = 12-oxo-(5Z,8Z,10E,14Z)-eicosatetraenoate + H2O. The catalysed reaction is (15S)-hydroperoxy-(5Z,8Z,11Z,13E)-eicosatetraenoate = 15-oxo-(5Z,8Z,11Z,13E)-eicosatetraenoate + H2O. It catalyses the reaction (13S)-hydroperoxy-(9Z,11E)-octadecadienoate = 13-oxo-(9Z,11E)-octadecadienoate + H2O. It carries out the reaction (5Z,8Z,11Z,14Z)-eicosatetraenoate + reduced [NADPH--hemoprotein reductase] + O2 = 13-hydroxy-(5Z,8Z,11Z,14Z)-eicosatetraenoate + oxidized [NADPH--hemoprotein reductase] + H2O + H(+). The enzyme catalyses (5Z,8Z,11Z,14Z)-eicosatetraenoate + reduced [NADPH--hemoprotein reductase] + O2 = 19-hydroxy-(5Z,8Z,11Z,14Z)-eicosatetraenoate + oxidized [NADPH--hemoprotein reductase] + H2O + H(+). The catalysed reaction is (9Z,12Z)-octadecadienoate + reduced [NADPH--hemoprotein reductase] + O2 = 11-hydroxy-(9Z,12Z)-octadecadienoate + oxidized [NADPH--hemoprotein reductase] + H2O + H(+). The protein operates within cofactor metabolism; retinol metabolism. It functions in the pathway steroid metabolism; cholesterol metabolism. It participates in lipid metabolism; arachidonate metabolism. Functionally, a cytochrome P450 monooxygenase involved in the metabolism of various endogenous substrates, including fatty acids, steroid hormones and vitamins. Mechanistically, uses molecular oxygen inserting one oxygen atom into a substrate, and reducing the second into a water molecule, with two electrons provided by NADPH via cytochrome P450 reductase (NADPH--hemoprotein reductase). Catalyzes the hydroxylation of carbon-hydrogen bonds. Exhibits high catalytic activity for the formation of hydroxyestrogens from estrone (E1) and 17beta-estradiol (E2), namely 2-hydroxy E1 and E2. Metabolizes cholesterol toward 25-hydroxycholesterol, a physiological regulator of cellular cholesterol homeostasis. May act as a major enzyme for all-trans retinoic acid biosynthesis in the liver. Catalyzes two successive oxidative transformation of all-trans retinol to all-trans retinal and then to the active form all-trans retinoic acid. Primarily catalyzes stereoselective epoxidation of the last double bond of polyunsaturated fatty acids (PUFA), displaying a strong preference for the (R,S) stereoisomer. Catalyzes bisallylic hydroxylation and omega-1 hydroxylation of PUFA. May also participate in eicosanoids metabolism by converting hydroperoxide species into oxo metabolites (lipoxygenase-like reaction, NADPH-independent). Plays a role in the oxidative metabolism of xenobiotics. Catalyzes the N-hydroxylation of heterocyclic amines and the O-deethylation of phenacetin. Metabolizes caffeine via N3-demethylation. In Cavia porcellus (Guinea pig), this protein is Cytochrome P450 1A2 (CYP1A2).